A 173-amino-acid chain; its full sequence is MDVTIQHPWFKRTLGPFYPSRLFDQFFGEGLFEYDLLPFLSSTISPYYRQSLFRTVLDSGISEVRSDRDKFVIFLDVKHFSPEDLTVKVQDDFVEIHGKHNERQDDHGYISREFHRRYRLPSNVDQSALSCSLSADGMLTFCGPKIQTGLDATHAERAIPVSREEKPTSAPSS.

Met1 is modified (N-acetylmethionine). The required for complex formation with BFSP1 and BFSP2; during homooligomerization, mediates the association of 2 dimers to form a tetramer stretch occupies residues 1–63 (MDVTIQHPWF…RTVLDSGISE (63 aa)). Gln6 bears the Deamidated glutamine; partial mark. Residue Ser45 is modified to Phosphoserine. A Deamidated glutamine; partial modification is found at Gln50. The 113-residue stretch at 52 to 164 (LFRTVLDSGI…AERAIPVSRE (113 aa)) folds into the sHSP domain. Residue Lys70 is modified to N6-acetyllysine. A Deamidated glutamine; partial modification is found at Gln90. Position 99 is an N6-acetyllysine (Lys99). His100 serves as a coordination point for Zn(2+). Position 101 is a deamidated asparagine; partial (Asn101). Zn(2+) contacts are provided by Glu102 and His107. Position 122 is a phosphoserine (Ser122). Asn123 is modified (deamidated asparagine; partial). Cys131 and Cys142 form a disulfide bridge. Residue Gln147 is modified to Deamidated glutamine; partial. A Zn(2+)-binding site is contributed by His154. A glycan (O-linked (GlcNAc) serine) is linked at Ser162.

This sequence belongs to the small heat shock protein (HSP20) family. Heteropolymer composed of three CRYAA and one CRYAB subunits. Inter-subunit bridging via zinc ions enhances stability, which is crucial as there is no protein turn over in the lens. Can also form homodimers and homotetramers (dimers of dimers) which serve as the building blocks of homooligomers. Within homooligomers, the zinc-binding motif is created from residues of 3 different molecules. His-100 and Glu-102 from one molecule are ligands of the zinc ion, and His-107 and His-154 residues from additional molecules complete the site with tetrahedral coordination geometry. Part of a complex required for lens intermediate filament formation composed of BFSP1, BFSP2 and CRYAA. O-glycosylated; contains N-acetylglucosamine side chains. Post-translationally, deamidation of Asn-101 in lens occurs mostly during the first 30 years of age, followed by a small additional amount of deamidation (approximately 5%) during the next approximately 38 years, resulting in a maximum of approximately 50% deamidation during the lifetime of the individual. In terms of processing, phosphorylation on Ser-122 seems to be developmentally regulated. Absent in the first months of life, it appears during the first 12 years of human lifetime. The relative amount of phosphorylated form versus unphosphorylated form does not change over the lifetime of the individual. Acetylation at Lys-70 may increase chaperone activity. Post-translationally, undergoes age-dependent proteolytical cleavage at the C-terminus. Alpha-crystallin A(1-172) is the most predominant form produced most rapidly during the first 12 years of age and after this age is present in approximately 50% of the lens molecules. In terms of processing, in young individuals and during the first approximately 30 years of life, less than half molecules contain an intramolecular disulfide bond (oxidized form), while in the remaining fraction the cysteines are in the free sulfhydryl form (reduced form). With aging, the amount of oxidized form increases up to 90% and it becomes a major constituent of high molecular weight aggregates, concomitant with an age-dependent loss of its chaperone activity. The reduced form is undetectable in cataractous lenses. Expressed in the eye lens (at protein level).

The protein resides in the cytoplasm. The protein localises to the nucleus. Functionally, contributes to the transparency and refractive index of the lens. In its oxidized form (absence of intramolecular disulfide bond), acts as a chaperone, preventing aggregation of various proteins under a wide range of stress conditions. Required for the correct formation of lens intermediate filaments as part of a complex composed of BFSP1, BFSP2 and CRYAA. The protein is Alpha-crystallin A chain (CRYAA) of Homo sapiens (Human).